A 337-amino-acid polypeptide reads, in one-letter code: Holliday junction branch migration complex subunit RuvB (337 aa).

The interval 1–22 is disordered; it reads MEDERITSAEVQSPDEENEELS. Residues 1 to 184 form a large ATPase domain (RuvB-L) region; that stretch reads MEDERITSAE…FGIVEHMNYY (184 aa). ATP contacts are provided by residues L23, R24, G65, K68, T69, T70, 131–133, R174, Y184, and R221; that span reads EDF. T69 provides a ligand contact to Mg(2+). The small ATPAse domain (RuvB-S) stretch occupies residues 185-255; it reads NEADLANIVR…LVSQSLKLLQ (71 aa). The head domain (RuvB-H) stretch occupies residues 258–337; it reads NRGLDRTDKK…LGLIDQYMNK (80 aa). 2 residues coordinate DNA: R313 and R318.

The protein belongs to the RuvB family. As to quaternary structure, homohexamer. Forms an RuvA(8)-RuvB(12)-Holliday junction (HJ) complex. HJ DNA is sandwiched between 2 RuvA tetramers; dsDNA enters through RuvA and exits via RuvB. An RuvB hexamer assembles on each DNA strand where it exits the tetramer. Each RuvB hexamer is contacted by two RuvA subunits (via domain III) on 2 adjacent RuvB subunits; this complex drives branch migration. In the full resolvosome a probable DNA-RuvA(4)-RuvB(12)-RuvC(2) complex forms which resolves the HJ.

The protein resides in the cytoplasm. It carries out the reaction ATP + H2O = ADP + phosphate + H(+). In terms of biological role, the RuvA-RuvB-RuvC complex processes Holliday junction (HJ) DNA during genetic recombination and DNA repair, while the RuvA-RuvB complex plays an important role in the rescue of blocked DNA replication forks via replication fork reversal (RFR). RuvA specifically binds to HJ cruciform DNA, conferring on it an open structure. The RuvB hexamer acts as an ATP-dependent pump, pulling dsDNA into and through the RuvAB complex. RuvB forms 2 homohexamers on either side of HJ DNA bound by 1 or 2 RuvA tetramers; 4 subunits per hexamer contact DNA at a time. Coordinated motions by a converter formed by DNA-disengaged RuvB subunits stimulates ATP hydrolysis and nucleotide exchange. Immobilization of the converter enables RuvB to convert the ATP-contained energy into a lever motion, pulling 2 nucleotides of DNA out of the RuvA tetramer per ATP hydrolyzed, thus driving DNA branch migration. The RuvB motors rotate together with the DNA substrate, which together with the progressing nucleotide cycle form the mechanistic basis for DNA recombination by continuous HJ branch migration. Branch migration allows RuvC to scan DNA until it finds its consensus sequence, where it cleaves and resolves cruciform DNA. The polypeptide is Holliday junction branch migration complex subunit RuvB (Pediococcus pentosaceus (strain ATCC 25745 / CCUG 21536 / LMG 10740 / 183-1w)).